A 634-amino-acid chain; its full sequence is DNA-directed RNA polymerase subunit gamma (634 aa).

Zn(2+) is bound by residues C74, C76, C89, and C92. D471, D473, and D475 together coordinate Mg(2+).

The protein belongs to the RNA polymerase beta' chain family. RpoC1 subfamily. In terms of assembly, in cyanobacteria the RNAP catalytic core is composed of 2 alpha, 1 beta, 1 beta', 1 gamma and 1 omega subunit. When a sigma factor is associated with the core the holoenzyme is formed, which can initiate transcription. Mg(2+) serves as cofactor. Zn(2+) is required as a cofactor.

It catalyses the reaction RNA(n) + a ribonucleoside 5'-triphosphate = RNA(n+1) + diphosphate. Functionally, DNA-dependent RNA polymerase catalyzes the transcription of DNA into RNA using the four ribonucleoside triphosphates as substrates. This chain is DNA-directed RNA polymerase subunit gamma, found in Prochlorococcus marinus (strain SARG / CCMP1375 / SS120).